The sequence spans 275 residues: Interleukin-2 receptor subunit alpha (275 aa).

Residues 1–21 (MEPSLLMWRFFVFIVVPGCVT) form the signal peptide. 2 consecutive Sushi domains span residues 22-81 (EACH…FCNS) and 121-186 (GHCE…KCIS). Residues 22–243 (EACHDDPPSL…DTFIFTTEYQ (222 aa)) lie on the Extracellular side of the membrane. 3 disulfide bridges follow: Cys24–Cys64, Cys49–Cys77, and Cys51–Cys79. N-linked (GlcNAc...) asparagine glycosylation is present at Asn80. Positions 86–130 (KNPVKPVTPGSEEQRERKPTDAQSQTQPPEQADLPGHCEEPPPWE) are disordered. The segment covering 121-130 (GHCEEPPPWE) has biased composition (basic and acidic residues). Cystine bridges form between Cys123-Cys168 and Cys152-Cys184. A disordered region spans residues 188–213 (GANSQAPDEAEPPESTEAPPGSGTFL). The chain crosses the membrane as a helical span at residues 244 to 262 (IAVAGCILLLSSILLLSCL). Residues 263 to 275 (TWQRRWKKNRRTI) lie on the Cytoplasmic side of the membrane.

Non-covalent dimer of an alpha and a beta subunit. IL2R exists in 3 different forms: a high affinity dimer, an intermediate affinity monomer (beta subunit), and a low affinity monomer (alpha subunit). The high and intermediate affinity forms also associate with a gamma subunit.

The protein resides in the membrane. In terms of biological role, receptor for interleukin-2. The receptor is involved in the regulation of immune tolerance by controlling regulatory T cells (TREGs) activity. TREGs suppress the activation and expansion of autoreactive T-cells. This is Interleukin-2 receptor subunit alpha (IL2RA) from Ovis aries (Sheep).